We begin with the raw amino-acid sequence, 319 residues long: Tetrahydromethanopterin S-methyltransferase subunit H (319 aa).

This sequence belongs to the MtrH family. The complex is composed of 8 subunits; MtrA, MtrB, MtrC, MtrD, MtrE, MtrF, MtrG and MtrH.

The enzyme catalyses 5-methyl-5,6,7,8-tetrahydromethanopterin + coenzyme M + 2 Na(+)(in) = 5,6,7,8-tetrahydromethanopterin + methyl-coenzyme M + 2 Na(+)(out). The protein operates within one-carbon metabolism; methanogenesis from CO(2); methyl-coenzyme M from 5,10-methylene-5,6,7,8-tetrahydromethanopterin: step 2/2. Its function is as follows. Part of a complex that catalyzes the formation of methyl-coenzyme M and tetrahydromethanopterin from coenzyme M and methyl-tetrahydromethanopterin. This is an energy-conserving, sodium-ion translocating step. MtrH catalyzes the transfer of the methyl group from methyl-tetrahydromethanopterin to the corrinoid prosthetic group of MtrA. The chain is Tetrahydromethanopterin S-methyltransferase subunit H from Methanococcus aeolicus (strain ATCC BAA-1280 / DSM 17508 / OCM 812 / Nankai-3).